A 70-amino-acid polypeptide reads, in one-letter code: Exodeoxyribonuclease 7 small subunit (70 aa).

The protein belongs to the XseB family. Heterooligomer composed of large and small subunits.

The protein localises to the cytoplasm. The catalysed reaction is Exonucleolytic cleavage in either 5'- to 3'- or 3'- to 5'-direction to yield nucleoside 5'-phosphates.. In terms of biological role, bidirectionally degrades single-stranded DNA into large acid-insoluble oligonucleotides, which are then degraded further into small acid-soluble oligonucleotides. In Streptococcus sanguinis (strain SK36), this protein is Exodeoxyribonuclease 7 small subunit.